Here is a 236-residue protein sequence, read N- to C-terminus: Orotidine 5'-phosphate decarboxylase (236 aa).

Residues aspartate 16, lysine 38, 65–74 (DLKLHDIGNT), threonine 123, arginine 184, glutamine 193, glycine 213, and arginine 214 contribute to the substrate site. Lysine 67 functions as the Proton donor in the catalytic mechanism.

It belongs to the OMP decarboxylase family. Type 1 subfamily. Homodimer.

It carries out the reaction orotidine 5'-phosphate + H(+) = UMP + CO2. It participates in pyrimidine metabolism; UMP biosynthesis via de novo pathway; UMP from orotate: step 2/2. In terms of biological role, catalyzes the decarboxylation of orotidine 5'-monophosphate (OMP) to uridine 5'-monophosphate (UMP). The polypeptide is Orotidine 5'-phosphate decarboxylase (Methylobacterium nodulans (strain LMG 21967 / CNCM I-2342 / ORS 2060)).